The following is a 59-amino-acid chain: ATP synthase subunit J, mitochondrial (59 aa).

A helical transmembrane segment spans residues 9-25; the sequence is ILKVYWPFFVAGAAVYY.

Belongs to the ATPase j subunit family. In terms of assembly, F-type ATPases have 2 components, CF(1) - the catalytic core - and CF(0) - the membrane proton channel. In yeast, the dimeric form of ATP synthase consists of 17 polypeptides: alpha, beta, gamma, delta, epsilon, 4 (B), 5 (OSCP), 6 (A), 8, 9 (C), d, E (Tim11), f, g, h, i/j and k.

It is found in the mitochondrion membrane. Its function is as follows. Mitochondrial membrane ATP synthase (F(1)F(0) ATP synthase or Complex V) produces ATP from ADP in the presence of a proton gradient across the membrane which is generated by electron transport complexes of the respiratory chain. F-type ATPases consist of two structural domains, F(1) - containing the extramembraneous catalytic core and F(0) - containing the membrane proton channel, linked together by a central stalk and a peripheral stalk. During catalysis, ATP synthesis in the catalytic domain of F(1) is coupled via a rotary mechanism of the central stalk subunits to proton translocation. Part of the complex F(0) domain. Minor subunit located with subunit a in the membrane. The sequence is that of ATP synthase subunit J, mitochondrial (ATP18) from Saccharomyces cerevisiae (strain ATCC 204508 / S288c) (Baker's yeast).